The following is a 122-amino-acid chain: Small ribosomal subunit protein uS13 (122 aa).

The segment at 94–122 (KKLPVRGQRTHTNARTRKGPAKPIAGKKK) is disordered.

Belongs to the universal ribosomal protein uS13 family. As to quaternary structure, part of the 30S ribosomal subunit. Forms a loose heterodimer with protein S19. Forms two bridges to the 50S subunit in the 70S ribosome.

Functionally, located at the top of the head of the 30S subunit, it contacts several helices of the 16S rRNA. In the 70S ribosome it contacts the 23S rRNA (bridge B1a) and protein L5 of the 50S subunit (bridge B1b), connecting the 2 subunits; these bridges are implicated in subunit movement. Contacts the tRNAs in the A and P-sites. The polypeptide is Small ribosomal subunit protein uS13 (Hyphomonas neptunium (strain ATCC 15444)).